The chain runs to 589 residues: Intermediate filament protein B (589 aa).

The interval 1–84 (SLKQSQESSE…LEATDKEKKE (84 aa)) is head. The IF rod domain maps to 81–433 (EKKEMQGLND…KMLEGEESRV (353 aa)). The coil 1A stretch occupies residues 85 to 116 (MQGLNDRLGNYIDRVKKLEEQNRKLVADLDEL). The interval 117–130 (RGRWGKDTSEIKIQ) is linker 1. The interval 131–268 (YSDSLRDARK…RVHEQEVKEL (138 aa)) is coil 1B. A linker 12 region spans residues 269–285 (QALLAQAPADTREFFKN). The interval 286–433 (ELALAIRDIK…KMLEGEESRV (148 aa)) is coil 2. Residues 434–589 (GLRQMVEQVV…HTQKTIQTGQ (156 aa)) are tail. A disordered region spans residues 446-470 (HSLQQQEDTDSTRNVRGEVSTKTTF). An LTD domain is found at 466 to 584 (TKTTFQRSAK…DERATHTQKT (119 aa)).

The protein belongs to the intermediate filament family. In terms of assembly, a and B can form homopolymers. As to expression, giant body muscle cells.

The protein resides in the cytoplasm. This is Intermediate filament protein B from Ascaris suum (Pig roundworm).